A 29-amino-acid chain; its full sequence is Toxin Bl-4 (29 aa).

Belongs to the long (4 C-C) scorpion toxin superfamily. Sodium channel inhibitor family. Beta subfamily. In terms of tissue distribution, expressed by the venom gland.

The protein resides in the secreted. Functionally, excitatory insect beta-toxins induce a spastic paralysis. They bind voltage-independently at site-4 of sodium channels (Nav) and shift the voltage of activation toward more negative potentials thereby affecting sodium channel activation and promoting spontaneous and repetitive firing. The fraction to which this protein belongs exhibits low toxicity and induces transient paralysis in all insects tested (the crickets A.domesticus). In Buthacus leptochelys (Egyptian fat-tailed scorpion), this protein is Toxin Bl-4.